Consider the following 509-residue polypeptide: Maturase K (509 aa).

Belongs to the intron maturase 2 family. MatK subfamily.

Its subcellular location is the plastid. The protein resides in the chloroplast. In terms of biological role, usually encoded in the trnK tRNA gene intron. Probably assists in splicing its own and other chloroplast group II introns. The sequence is that of Maturase K from Sequoia sempervirens (California redwood).